The chain runs to 464 residues: Chromosomal replication initiator protein DnaA (464 aa).

The segment at 1 to 90 is domain I, interacts with DnaA modulators; it reads MNNDNTEVLE…KYWQDEDQSI (90 aa). The domain II stretch occupies residues 90 to 126; that stretch reads ICSVDICVVSNQDPNLLVDIKDRVDRGIKGNCDNVSS. The domain III, AAA+ region stretch occupies residues 127–345; that stretch reads PLDPRFTFDN…GALNKVVAHS (219 aa). ATP-binding residues include glycine 173, glycine 175, lysine 176, and threonine 177. The domain IV, binds dsDNA stretch occupies residues 346 to 464; the sequence is SLVGCSITLD…DINLLNRMLR (119 aa).

The protein belongs to the DnaA family. As to quaternary structure, oligomerizes as a right-handed, spiral filament on DNA at oriC.

Its subcellular location is the cytoplasm. In terms of biological role, plays an essential role in the initiation and regulation of chromosomal replication. ATP-DnaA binds to the origin of replication (oriC) to initiate formation of the DNA replication initiation complex once per cell cycle. Binds the DnaA box (a 9 base pair repeat at the origin) and separates the double-stranded (ds)DNA. Forms a right-handed helical filament on oriC DNA; dsDNA binds to the exterior of the filament while single-stranded (ss)DNA is stabiized in the filament's interior. The ATP-DnaA-oriC complex binds and stabilizes one strand of the AT-rich DNA unwinding element (DUE), permitting loading of DNA polymerase. After initiation quickly degrades to an ADP-DnaA complex that is not apt for DNA replication. Binds acidic phospholipids. The polypeptide is Chromosomal replication initiator protein DnaA (Ehrlichia ruminantium (strain Gardel)).